Here is a 1091-residue protein sequence, read N- to C-terminus: ATP-dependent helicase/deoxyribonuclease subunit B (1091 aa).

This sequence belongs to the helicase family. AddB/RexB type 2 subfamily. In terms of assembly, heterodimer of AddA and RexB. It depends on Mg(2+) as a cofactor.

Its function is as follows. The heterodimer acts as both an ATP-dependent DNA helicase and an ATP-dependent, dual-direction single-stranded exonuclease. Recognizes the chi site generating a DNA molecule suitable for the initiation of homologous recombination. This subunit has 5' -&gt; 3' nuclease activity but not helicase activity. The chain is ATP-dependent helicase/deoxyribonuclease subunit B from Streptococcus pneumoniae (strain CGSP14).